Consider the following 333-residue polypeptide: Putative ketol-acid reductoisomerase 2 (333 aa).

Positions 1–182 constitute a KARI N-terminal Rossmann domain; the sequence is MDKTVLDANL…AIPGGIAVIS (182 aa). In terms of domain architecture, KARI C-terminal knotted spans 183–329; it reads SFEEEALLDL…KELYKLLGRK (147 aa).

Belongs to the ketol-acid reductoisomerase family.

It catalyses the reaction (2R)-2,3-dihydroxy-3-methylbutanoate + NADP(+) = (2S)-2-acetolactate + NADPH + H(+). It carries out the reaction (2R,3R)-2,3-dihydroxy-3-methylpentanoate + NADP(+) = (S)-2-ethyl-2-hydroxy-3-oxobutanoate + NADPH + H(+). It functions in the pathway amino-acid biosynthesis; L-isoleucine biosynthesis; L-isoleucine from 2-oxobutanoate: step 2/4. It participates in amino-acid biosynthesis; L-valine biosynthesis; L-valine from pyruvate: step 2/4. In Saccharolobus solfataricus (strain ATCC 35092 / DSM 1617 / JCM 11322 / P2) (Sulfolobus solfataricus), this protein is Putative ketol-acid reductoisomerase 2 (ilvC2).